Consider the following 484-residue polypeptide: CUGBP Elav-like family member 2 (484 aa).

2 necessary for nuclear export regions span residues 1–89 (MNGA…PGMH) and 90–178 (HPIQ…EGCS). RRM domains lie at 16 to 99 (IKTF…PADS), 108 to 188 (RKLF…FADT), and 399 to 477 (ANLF…LKRS). The segment at 188-240 (TQKDKEQRRLQQQLAQQMQQLNTATWGNLTGLGGLTPQYLALLQQATSSSNLG) is necessary for splicing activity. Positions 347–399 (GLTNGTAGTMDALTQAYSGIQQYAAAALPTLYSQSLLQQQSAAGSQKEGPEGA) are necessary for nuclear localization. Residues 426–484 (ISAKVFIDKQTNLSKCFGFVSYDNPVSAQAAIQAMNGFQIGMKRLKVQLKRSKNDSKPY) are necessary for nuclear localization and splicing activity.

This sequence belongs to the CELF/BRUNOL family. In terms of tissue distribution, expressed in heart.

Its subcellular location is the nucleus. It is found in the cytoplasm. In terms of biological role, RNA-binding protein implicated in the regulation of several post-transcriptional events. May be involved in mRNA translation repression and stability. Mediates exon inclusion in TNNT2 pre-mRNA. This chain is CUGBP Elav-like family member 2 (CELF2), found in Gallus gallus (Chicken).